A 120-amino-acid polypeptide reads, in one-letter code: DNA-directed RNA polymerase II subunit rpb11 (120 aa).

The protein belongs to the archaeal Rpo11/eukaryotic RPB11/RPC19 RNA polymerase subunit family. As to quaternary structure, component of the RNA polymerase II (Pol II) complex consisting of 12 subunits.

The protein localises to the nucleus. Its function is as follows. DNA-dependent RNA polymerase catalyzes the transcription of DNA into RNA using the four ribonucleoside triphosphates as substrates. Component of RNA polymerase II which synthesizes mRNA precursors and many functional non-coding RNAs. Pol II is the central component of the basal RNA polymerase II transcription machinery. It is composed of mobile elements that move relative to each other. RPB11 is part of the core element with the central large cleft. The sequence is that of DNA-directed RNA polymerase II subunit rpb11 (polr2j) from Dictyostelium discoideum (Social amoeba).